Here is a 239-residue protein sequence, read N- to C-terminus: Ribosomal RNA small subunit methyltransferase G (239 aa).

Residues glycine 78, phenylalanine 83, 129–130 (AE), and arginine 148 contribute to the S-adenosyl-L-methionine site.

Belongs to the methyltransferase superfamily. RNA methyltransferase RsmG family.

It localises to the cytoplasm. Specifically methylates the N7 position of a guanine in 16S rRNA. This chain is Ribosomal RNA small subunit methyltransferase G, found in Clostridium botulinum (strain Okra / Type B1).